Here is a 639-residue protein sequence, read N- to C-terminus: Synaptotagmin-16 (639 aa).

Residues Asn-95 to Val-119 are compositionally biased toward polar residues. Residues Asn-95–Lys-191 are disordered. A compositionally biased stretch (pro residues) spans Pro-121–Gln-134. Residues Glu-142 to Arg-151 show a composition bias toward basic and acidic residues. The segment covering Gly-174 to Glu-187 has biased composition (acidic residues). One can recognise a C2 1 domain in the interval Lys-344–Leu-463. The interval Asn-470 to Ser-496 is disordered. The segment covering Ser-476–Ser-496 has biased composition (low complexity). Positions Gly-499–His-634 constitute a C2 2 domain.

It belongs to the synaptotagmin family. In terms of assembly, homodimer. Can also form heterodimers. As to expression, highly expressed in heart and testis. Moderately expressed in kidney.

In terms of biological role, may be involved in the trafficking and exocytosis of secretory vesicles in non-neuronal tissues. Is Ca(2+)-independent. The polypeptide is Synaptotagmin-16 (Syt16) (Mus musculus (Mouse)).